Here is a 57-residue protein sequence, read N- to C-terminus: Large ribosomal subunit protein bL32 (57 aa).

A compositionally biased stretch (basic residues) spans 1-19; it reads MAVPKRRMSRANTRSRRAQ. Positions 1–20 are disordered; the sequence is MAVPKRRMSRANTRSRRAQW.

Belongs to the bacterial ribosomal protein bL32 family.

The sequence is that of Large ribosomal subunit protein bL32 from Mycolicibacterium smegmatis (strain ATCC 700084 / mc(2)155) (Mycobacterium smegmatis).